The primary structure comprises 421 residues: Protein MucB (421 aa).

Residues 2–187 (FALIDVNGMY…LPVAEVWGVG (186 aa)) form the UmuC domain.

The protein belongs to the DNA polymerase type-Y family.

In terms of biological role, involved in UV protection and mutation. The protein is Protein MucB (mucB) of Salmonella typhimurium.